A 219-amino-acid polypeptide reads, in one-letter code: Ras-related protein Rab-3 (219 aa).

GTP-binding positions include 29-37 (GNSSVGKTS), 48-54 (TSAFVST), 77-81 (DTAGQ), 135-138 (NKCD), and 165-167 (SAK). The short motif at 51–59 (FVSTVGIDF) is the Effector region element. The interval 191-219 (LDKDPQQQPKGQKLEANPTQKPAQQQCNC) is disordered. Positions 207 to 219 (NPTQKPAQQQCNC) are enriched in polar residues. S-geranylgeranyl cysteine attachment occurs at residues Cys217 and Cys219. Cys219 carries the cysteine methyl ester modification.

Belongs to the small GTPase superfamily. Rab family.

The protein localises to the cell membrane. Involved in exocytosis by regulating a late step in synaptic vesicle fusion. Could play a role in neurotransmitter release by regulating membrane flow in the nerve terminal. Plays a role in the recruitment of endophilin unc-57 to synaptic vesicles. Probably by controlling dense-core vesicle trafficking, plays a role in the AVG neuron-mediated formation of the right axon tract of the ventral nerve cord. This is Ras-related protein Rab-3 (rab-3) from Caenorhabditis elegans.